A 582-amino-acid chain; its full sequence is Aspartate--tRNA ligase (582 aa).

Glutamate 174 lines the L-aspartate pocket. The tract at residues 198–201 (QITK) is aspartate. L-aspartate is bound at residue arginine 220. ATP is bound by residues 220–222 (RDE) and glutamine 229. Residue histidine 443 coordinates L-aspartate. Glutamate 477 serves as a coordination point for ATP. Arginine 484 serves as a coordination point for L-aspartate. 529-532 (GLDR) is an ATP binding site.

The protein belongs to the class-II aminoacyl-tRNA synthetase family. Type 1 subfamily. Homodimer.

Its subcellular location is the cytoplasm. The catalysed reaction is tRNA(Asp) + L-aspartate + ATP = L-aspartyl-tRNA(Asp) + AMP + diphosphate. Catalyzes the attachment of L-aspartate to tRNA(Asp) in a two-step reaction: L-aspartate is first activated by ATP to form Asp-AMP and then transferred to the acceptor end of tRNA(Asp). The sequence is that of Aspartate--tRNA ligase from Streptococcus pyogenes serotype M5 (strain Manfredo).